The chain runs to 340 residues: Protein RecA (340 aa).

ATP is bound at residue 65 to 72 (GPESGGKT).

The protein belongs to the RecA family.

It localises to the cytoplasm. Can catalyze the hydrolysis of ATP in the presence of single-stranded DNA, the ATP-dependent uptake of single-stranded DNA by duplex DNA, and the ATP-dependent hybridization of homologous single-stranded DNAs. It interacts with LexA causing its activation and leading to its autocatalytic cleavage. This chain is Protein RecA, found in Thermus aquaticus.